The chain runs to 464 residues: Gasdermin-A3 (464 aa).

The interval Met-1–Gly-261 is triggers pyroptosis. A cardiolipin is bound at residue Arg-9 to Arg-13. Beta stranded transmembrane passes span Asn-78 to Val-95, Val-99 to Val-120, Val-164 to Ser-180, and Leu-184 to Ile-198. Residues Glu-255–Ala-327 adopt a coiled-coil conformation.

This sequence belongs to the gasdermin family. In terms of assembly, homooligomer; homooligomeric ring-shaped pore complex containing 18-36 subunits when inserted in the membrane. In terms of processing, cleavage relieves autoinhibition by releasing the N-terminal moiety (Gasdermin-A3, N-terminal) that initiates pyroptosis. In contrast to Gsdma, not cleaved by bacterial effector protein SpeB. Palmitoylated. As to expression, highest levels in skin with weak expression in placenta and testis. Not detected in the gastrointestinal tract. In skin, expressed in postnatal hair follicles and epidermis as well as sebaceous gland basal cells.

It localises to the cytoplasm. It is found in the cytosol. Its subcellular location is the cell membrane. The protein resides in the mitochondrion membrane. With respect to regulation, the full-length protein before cleavage is inactive: intramolecular interactions between N- and C-terminal domains mediate autoinhibition in the absence of activation signal. The intrinsic pyroptosis-inducing activity is carried by the released N-terminal moiety (Gasdermin-A3, N-terminal). Functionally, precursor of a pore-forming protein involved in the transition from catagen to telogen at the end of hair follicle morphogenesis. This form constitutes the precursor of the pore: upon cleavage, the released N-terminal moiety (Gasdermin-A3, N-terminal) binds to membranes and forms pores, triggering pyroptosis. This form acts as a sensor of infection: activation is triggered by cleavage by some bacterial effector protein, which releases the N-terminal moiety (Gasdermin-A3, N-terminal). In terms of biological role, pore-forming protein that causes membrane permeabilization and pyroptosis. Released upon cleavage by some bacterial effector protein, and binds to membrane inner leaflet lipids. Homooligomerizes within the membrane and forms pores of 10-15 nanometers (nm) of inner diameter, allowing the release of mature interleukin-1 (IL1B and IL18) and triggering pyroptosis. Binds to membrane inner leaflet lipids, including bisphosphorylated phosphatidylinositols, such as phosphatidylinositol (4,5)-bisphosphate, as well as phosphatidylinositol (3,4,5)-bisphosphate, and more weakly to monophosphorylated phosphatidylinositols. Also binds to bacterial and mitochondrial lipids, including cardiolipin, and exhibits bactericidal activity. Plays a role in the transition from catagen to telogen at the end of hair follicle morphogenesis, possibly by regulating hair follicle stem cell niche maintenance. Also required for mammary gland development. This Mus musculus (Mouse) protein is Gasdermin-A3.